Consider the following 394-residue polypeptide: Immune-associated nucleotide-binding protein 12 (394 aa).

In terms of domain architecture, AIG1-type G spans 45 to 251 (KPARTLLLVG…YMADLSHEIR (207 aa)). The tract at residues 54–61 (GRSGNGKS) is G1. GTP is bound by residues 54–62 (GRSGNGKSA) and Ser-75. The segment at 81–85 (GVTTA) is G2. The G3 stretch occupies residues 103–106 (DTPG). The G4 stretch occupies residues 173–176 (TNED). The interval 210-212 (RNR) is G5. GTP is bound at residue Asn-211. Positions 289–387 (NQQLRQMMER…KQMATDLQKS (99 aa)) form a coiled coil.

It belongs to the TRAFAC class TrmE-Era-EngA-EngB-Septin-like GTPase superfamily. AIG1/Toc34/Toc159-like paraseptin GTPase family. IAN subfamily.

The polypeptide is Immune-associated nucleotide-binding protein 12 (Arabidopsis thaliana (Mouse-ear cress)).